A 217-amino-acid chain; its full sequence is Probable transaldolase (217 aa).

The active-site Schiff-base intermediate with substrate is the Lys83.

Belongs to the transaldolase family. Type 3B subfamily.

It is found in the cytoplasm. It catalyses the reaction D-sedoheptulose 7-phosphate + D-glyceraldehyde 3-phosphate = D-erythrose 4-phosphate + beta-D-fructose 6-phosphate. Its pathway is carbohydrate degradation; pentose phosphate pathway; D-glyceraldehyde 3-phosphate and beta-D-fructose 6-phosphate from D-ribose 5-phosphate and D-xylulose 5-phosphate (non-oxidative stage): step 2/3. Functionally, transaldolase is important for the balance of metabolites in the pentose-phosphate pathway. In Rhizorhabdus wittichii (strain DSM 6014 / CCUG 31198 / JCM 15750 / NBRC 105917 / EY 4224 / RW1) (Sphingomonas wittichii), this protein is Probable transaldolase.